We begin with the raw amino-acid sequence, 773 residues long: Lon protease homolog 2, peroxisomal (773 aa).

Residues 9–198 enclose the Lon N-terminal domain; sequence LPVIVVDSGV…MCEKWMQMQR (190 aa). Position 336–343 (336–343) interacts with ATP; it reads GPPGIGKT. Positions 587–766 constitute a Lon proteolytic domain; it reads PLPPGVCFGL…EDVIEAMMEK (180 aa). Catalysis depends on residues serine 672 and lysine 715. Positions 771-773 match the Microbody targeting signal motif; that stretch reads AKL.

The protein belongs to the peptidase S16 family.

The protein localises to the peroxisome matrix. It catalyses the reaction Hydrolysis of proteins in presence of ATP.. Functionally, ATP-dependent serine protease that mediates the selective degradation of misfolded and unassembled polypeptides in the peroxisomal matrix. Necessary for type 2 peroxisome targeting signal (PTS2)-containing protein processing and facilitates peroxisome matrix protein import. The sequence is that of Lon protease homolog 2, peroxisomal from Caenorhabditis briggsae.